The chain runs to 484 residues: UDP-N-acetylmuramoyl-L-alanyl-D-glutamate--L-lysine ligase (484 aa).

Ser43 lines the UDP-N-acetyl-alpha-D-muramoyl-L-alanyl-D-glutamate pocket. 119–125 (GTKGKTT) lines the ATP pocket. UDP-N-acetyl-alpha-D-muramoyl-L-alanyl-D-glutamate is bound by residues 161–162 (TT), Ser188, and Arg196. An N6-carboxylysine modification is found at Lys230. Positions 405-408 (DDPN) match the L-lysine recognition motif motif.

This sequence belongs to the MurCDEF family. MurE subfamily. Carboxylation is probably crucial for Mg(2+) binding and, consequently, for the gamma-phosphate positioning of ATP.

The protein resides in the cytoplasm. It catalyses the reaction UDP-N-acetyl-alpha-D-muramoyl-L-alanyl-D-glutamate + L-lysine + ATP = UDP-N-acetyl-alpha-D-muramoyl-L-alanyl-gamma-D-glutamyl-L-lysine + ADP + phosphate + H(+). Its pathway is cell wall biogenesis; peptidoglycan biosynthesis. In terms of biological role, catalyzes the addition of L-lysine to the nucleotide precursor UDP-N-acetylmuramoyl-L-alanyl-D-glutamate (UMAG) in the biosynthesis of bacterial cell-wall peptidoglycan. The polypeptide is UDP-N-acetylmuramoyl-L-alanyl-D-glutamate--L-lysine ligase (Streptococcus agalactiae serotype III (strain NEM316)).